Consider the following 815-residue polypeptide: SNF1 protein kinase subunit beta-1 (815 aa).

Residues M1–S11 are compositionally biased toward polar residues. Disordered stretches follow at residues M1–K88 and S117–R146. G2 is lipidated: N-myristoyl glycine. The span at H12–Q31 shows a compositional bias: basic and acidic residues. The segment covering G32–R42 has biased composition (polar residues). S33 carries the phosphoserine modification. Composition is skewed to basic and acidic residues over residues P72–K88 and S117–V129. 6 positions are modified to phosphoserine: S181, S198, S200, S206, S209, and S220. 2 disordered regions span residues H311–F335 and K362–L389. Over residues N313 to G326 the composition is skewed to low complexity. Residue S331 is modified to Phosphoserine. Over residues H363–R376 the composition is skewed to basic residues. The segment covering S377–L389 has biased composition (low complexity). A kinase-interacting sequence (KIS); required for interaction with SNF1 region spans residues V473–E716. 2 positions are modified to phosphoserine: S494 and S497. Residues E581–S616 form a disordered region. The segment covering E587–R596 has biased composition (basic and acidic residues). The segment covering S599–S608 has biased composition (low complexity). S643 bears the Phosphoserine mark. Residues S724–C804 are association with SNF1 kinase complex (ASC) domain; required for interaction with SNF4.

This sequence belongs to the 5'-AMP-activated protein kinase beta subunit family. As to quaternary structure, component of the SNF1 kinase complex, a heterotrimeric complex composed of the catalytic alpha subunit SNF1, one of the three related beta subunits SIP1, SIP2 or GAL83, and the regulatory gamma subunit SNF4. The beta subunit serves as a bridge between the catalytic and the regulatory subunit. Interacts (via KIS domain) with SNF1. Interacts (via ASC domain) with SNF4. Post-translationally, phosphorylated by SNF1 in vitro.

The protein resides in the cytoplasm. The protein localises to the vacuole membrane. In terms of biological role, beta subunit of the SNF1 kinase complex, which is required for transcriptional, metabolic, and developmental adaptations in response to glucose limitation. Has a structural role, mediating heterotrimer formation, and a regulatory role, defining carbon source-regulated subcellular location and substrate specificity of the SNF1 kinase complex. Promotes the PKA-regulated relocalization of the SNF1 kinase complex to the vacuolar membrane in response to various types of carbon stress. In Saccharomyces cerevisiae (strain ATCC 204508 / S288c) (Baker's yeast), this protein is SNF1 protein kinase subunit beta-1 (SIP1).